The sequence spans 39 residues: Adipokinetic prohormone type 2 (39 aa).

Q1 carries the pyrrolidone carboxylic acid modification. W8 carries the tryptophan amide modification.

The protein belongs to the AKH/HRTH/RPCH family. Adipokinetic hormone precursor-related peptide (APRP) can form three type of disulfide-bond dimers: p1 (alpha-alpha), p2 (alpha-beta), and p3 (beta-beta).

The protein localises to the secreted. Its function is as follows. This hormone, released from cells in the corpora cardiaca, causes release of diglycerides from the fat body and stimulation of muscles to use these diglycerides as an energy source during energy-demanding processes. The sequence is that of Adipokinetic prohormone type 2 from Schistocerca gregaria (Desert locust).